A 405-amino-acid polypeptide reads, in one-letter code: MAGVLGMILAGGEGSRLKPLTETRTKPAVPFGGSYRLIDFALNNFVNADLMRIYVLTQFKSQSLYIHMKKGWNLSGITDRFIDIIPAQMRDGKRWYEGTADAIYQNLRFVEIVAPDQVCIFGSDHIYKMDIRQMLDFHRRMEAELTVSALRMPISQASQFGVIEVDENGKMVGFEEKPSNPKSIPGEPEWALVSMGNYIFEAETLSKELREDAENNQSSHDFGKDIIPKMFPRGKVYVYDFTTNKIKGEKESTYWRDVGTIESYWSAHMDLLDKDPEFSLYNRSWPLHTYYPPLPPATFVDVKDKKVKITDSLISGGSYIQGSTIYKSVLGFRSNIAAGSFISESVILGDVKIGAGCTIKRAIIDKDVEIAAGTIIGEDLEMDRKRFHVSDEGIVVIAKGSKVGF.

Alpha-D-glucose 1-phosphate is bound by residues Y96, G161, 176–177 (EK), and S194.

The protein belongs to the bacterial/plant glucose-1-phosphate adenylyltransferase family. As to quaternary structure, homotetramer.

It carries out the reaction alpha-D-glucose 1-phosphate + ATP + H(+) = ADP-alpha-D-glucose + diphosphate. Its pathway is glycan biosynthesis; glycogen biosynthesis. In terms of biological role, involved in the biosynthesis of ADP-glucose, a building block required for the elongation reactions to produce glycogen. Catalyzes the reaction between ATP and alpha-D-glucose 1-phosphate (G1P) to produce pyrophosphate and ADP-Glc. The chain is Glucose-1-phosphate adenylyltransferase 1 from Vibrio cholerae serotype O1 (strain ATCC 39315 / El Tor Inaba N16961).